The primary structure comprises 428 residues: MLGALLLSGAVHAAVQPLDSVVAIVDNDVIMKSQMDQRVREVQQTIAKRGSGVPPAEALQPQVLDRLILENLQLQMGERSGIRVSDEELNQAIGTIAQRNNMSVEQFRAALAHDGLSYNDAREQVRREMIISRVRQRRVAERIQVSQQEVKNFLASDMGKAQLSEEFHLANILIATPDSASSDAIQAAAVKAKGIYDQLKKGADFTRLAATSSSSENALEGGDMGWRKAAQLPPPFGDMLSSMPVGDVTPPARTPGGFIILKLLEKRGGQGQAQMRDEVHVRHILIKPSEIRNEEETKRLAQKIYDRIENGEDFAELAKSFSEDPGSALNGGDLNWVDPNSLVPEFRQVMSETPQGVLSKPFQTQYGWHVLEVLGRRSTDATDQAREQQALNVLRNRKYDEELQTWLRQIRDEAYVEIKLPGATQAAQ.

The signal sequence occupies residues 1-13 (MLGALLLSGAVHA). 2 consecutive PpiC domains span residues 164-265 (SEEF…KLLE) and 276-375 (RDEV…EVLG). The tract at residues 211–230 (TSSSSENALEGGDMGWRKAA) is disordered.

The protein resides in the periplasm. It catalyses the reaction [protein]-peptidylproline (omega=180) = [protein]-peptidylproline (omega=0). In terms of biological role, chaperone involved in the correct folding and assembly of outer membrane proteins. Recognizes specific patterns of aromatic residues and the orientation of their side chains, which are found more frequently in integral outer membrane proteins. May act in both early periplasmic and late outer membrane-associated steps of protein maturation. This chain is Chaperone SurA, found in Pseudomonas syringae pv. syringae (strain B728a).